The chain runs to 1132 residues: DNA-directed RNA polymerase I subunit RPA2 (1132 aa).

The C4-type zinc-finger motif lies at 1067-1098 (CMDCGSLLSPLLEKPPPNWSATRHRKTICLLC).

It belongs to the RNA polymerase beta chain family. In terms of assembly, component of the RNA polymerase I (Pol I) complex consisting of at least 13 subunits.

Its subcellular location is the nucleus. It is found in the nucleolus. The protein resides in the chromosome. It catalyses the reaction RNA(n) + a ribonucleoside 5'-triphosphate = RNA(n+1) + diphosphate. DNA-dependent RNA polymerase catalyzes the transcription of DNA into RNA using the four ribonucleoside triphosphates as substrates. Second largest core component of RNA polymerase I which synthesizes ribosomal RNA precursors. Proposed to contribute to the polymerase catalytic activity and forms the polymerase active center together with the largest subunit. Pol I is composed of mobile elements and RPA2 is part of the core element with the central large cleft and probably a clamp element that moves to open and close the cleft. The sequence is that of DNA-directed RNA polymerase I subunit RPA2 (polr1b) from Danio rerio (Zebrafish).